Here is a 352-residue protein sequence, read N- to C-terminus: Phosphoribosylformylglycinamidine cyclo-ligase (352 aa).

The protein belongs to the AIR synthase family.

It is found in the cytoplasm. It catalyses the reaction 2-formamido-N(1)-(5-O-phospho-beta-D-ribosyl)acetamidine + ATP = 5-amino-1-(5-phospho-beta-D-ribosyl)imidazole + ADP + phosphate + H(+). It participates in purine metabolism; IMP biosynthesis via de novo pathway; 5-amino-1-(5-phospho-D-ribosyl)imidazole from N(2)-formyl-N(1)-(5-phospho-D-ribosyl)glycinamide: step 2/2. In Pseudomonas syringae pv. tomato (strain ATCC BAA-871 / DC3000), this protein is Phosphoribosylformylglycinamidine cyclo-ligase.